Reading from the N-terminus, the 126-residue chain is Adult-specific rigid cuticular protein 12.4 (126 aa).

The Chitin-binding type R&amp;R domain occupies 9 to 87 (GGAYNFGFNT…AMAALAPKAP (79 aa)).

Functionally, component of the rigid cuticle of the spider. The chain is Adult-specific rigid cuticular protein 12.4 from Araneus diadematus (European garden spider).